Here is a 164-residue protein sequence, read N- to C-terminus: Cyclic pyranopterin monophosphate synthase (164 aa).

Substrate is bound by residues 75–77 (MCH) and 116–117 (ME). Residue aspartate 131 is part of the active site.

The protein belongs to the MoaC family. Homohexamer; trimer of dimers.

It carries out the reaction (8S)-3',8-cyclo-7,8-dihydroguanosine 5'-triphosphate = cyclic pyranopterin phosphate + diphosphate. It functions in the pathway cofactor biosynthesis; molybdopterin biosynthesis. Catalyzes the conversion of (8S)-3',8-cyclo-7,8-dihydroguanosine 5'-triphosphate to cyclic pyranopterin monophosphate (cPMP). The protein is Cyclic pyranopterin monophosphate synthase of Staphylococcus aureus (strain USA300).